The following is a 373-amino-acid chain: Gametogenetin-binding protein 1 (373 aa).

2 disordered regions span residues Val26–Thr113 and Lys237–Glu268. Polar residues predominate over residues Asn36–Glu49. The interval Leu226–Glu373 is required for induction of mitochondrial fragmentation. Positions Ser254 to Glu263 are enriched in basic and acidic residues. The segment at Lys301 to Glu373 is interaction with GGN.

Interacts with CCDC159. Interacts with GGN.

The protein resides in the cytoplasm. It is found in the membrane. Its subcellular location is the golgi apparatus. The protein localises to the mitochondrion intermembrane space. Functionally, induces mitochondrial fragmentation, possibly by promoting DNM1L-dependent fission and may play a role in mitochondrial morphogenesis during spermatogenesis. In Rattus norvegicus (Rat), this protein is Gametogenetin-binding protein 1 (Ggnbp1).